Consider the following 130-residue polypeptide: Glycine cleavage system H protein (130 aa).

Residues 22–103 (KAYIGISDCA…PYGSWIIAVE (82 aa)) form the Lipoyl-binding domain. The residue at position 63 (Lys-63) is an N6-lipoyllysine.

Belongs to the GcvH family. The glycine cleavage system is composed of four proteins: P, T, L and H. (R)-lipoate serves as cofactor.

Its function is as follows. The glycine cleavage system catalyzes the degradation of glycine. The H protein shuttles the methylamine group of glycine from the P protein to the T protein. This chain is Glycine cleavage system H protein, found in Clostridium botulinum (strain Kyoto / Type A2).